Consider the following 327-residue polypeptide: GTPase Obg (327 aa).

The Obg domain occupies 1–159 (MQFIDQANII…WEVQLELKLL (159 aa)). One can recognise an OBG-type G domain in the interval 160-327 (AEVGIIGLPN…PLLSEVWKRI (168 aa)). ATP is bound by residues 166–173 (GLPNAGKS), 191–195 (FTTLI), 213–216 (DIPG), 280–283 (NKME), and 309–311 (SSS). Mg(2+) contacts are provided by serine 173 and threonine 193.

The protein belongs to the TRAFAC class OBG-HflX-like GTPase superfamily. OBG GTPase family. Monomer. Mg(2+) serves as cofactor.

The protein resides in the cytoplasm. Functionally, an essential GTPase which binds GTP, GDP and possibly (p)ppGpp with moderate affinity, with high nucleotide exchange rates and a fairly low GTP hydrolysis rate. Plays a role in control of the cell cycle, stress response, ribosome biogenesis and in those bacteria that undergo differentiation, in morphogenesis control. The chain is GTPase Obg from Prochlorococcus marinus subsp. pastoris (strain CCMP1986 / NIES-2087 / MED4).